Here is a 129-residue protein sequence, read N- to C-terminus: M-zodatoxin-Lt8a (129 aa).

Residues 1–20 (MKYFVVALALVAAFACIAES) form the signal peptide. A propeptide spanning residues 21 to 60 (KPAESEHELAEVEEENELADLEDAVWLEHLADLSDLEEAR) is cleaved from the precursor. Residues 57–60 (EEAR) carry the Processing quadruplet motif motif.

This sequence belongs to the cationic peptide 06 (cytoinsectotoxin) family. In terms of processing, cleavage of the propeptide depends on the processing quadruplet motif (XXXR, with at least one of X being E). As to expression, expressed by the venom gland.

The protein localises to the secreted. Its function is as follows. Insecticidal, cytolytic and antimicrobial peptide. Has insecticidal activity against the flesh fly S.carnaria, and against the cockroach N.cinerea. Has insecticidal activity against D.melanogaster. Has hemolytic activity against human erythrocytes (EC(50)=6 uM). Has cytolytic activity against insect Sf9 cells (EC(50)=1 uM) and human leukocytes (EC(50)=3 uM). Has antibacterial activity against the Gram-positive bacteria A.globiformis VKM Ac-1112 (MIC=0.5 uM), and B.subtilis VKM B-501 (MIC=0.6-0.9 uM), and against the Gram-negative bacteria E.coli C600 (MIC=0.5 uM), E.coli DH5alpha (MIC=0.9 uM), E.coli MH1 (MIC=0.5 uM), P.aeruginosa PAO1 (MIC=1.9 uM), and P.fluorescens VKM B-894 (MIC=3.8 uM). Lacks antimicrobial activity against the Gram-positive bacteria M.luteus and S.aureus, and against the Gram-negative bacterium S.marcescens. Forms voltage-dependent, ion-permeable channels in membranes. At high concentration causes cell membrane lysis. In Lachesana tarabaevi (Spider), this protein is M-zodatoxin-Lt8a (cit 1-1).